The chain runs to 79 residues: Sulfur carrier protein TusA (79 aa).

Catalysis depends on C16, which acts as the Cysteine persulfide intermediate.

It belongs to the sulfur carrier protein TusA family.

It localises to the cytoplasm. Sulfur carrier protein which probably makes part of a sulfur-relay system. This Pseudomonas paraeruginosa (strain DSM 24068 / PA7) (Pseudomonas aeruginosa (strain PA7)) protein is Sulfur carrier protein TusA.